The primary structure comprises 163 residues: Probable chemoreceptor glutamine deamidase CheD (163 aa).

It belongs to the CheD family.

It carries out the reaction L-glutaminyl-[protein] + H2O = L-glutamyl-[protein] + NH4(+). Probably deamidates glutamine residues to glutamate on methyl-accepting chemotaxis receptors (MCPs), playing an important role in chemotaxis. This is Probable chemoreceptor glutamine deamidase CheD from Borreliella afzelii (strain PKo) (Borrelia afzelii).